The primary structure comprises 466 residues: Adenosylhomocysteinase (466 aa).

Substrate contacts are provided by Thr57, Asp132, and Glu192. Thr193–Thr195 is a binding site for NAD(+). Substrate contacts are provided by Lys222 and Asp226. NAD(+)-binding positions include Asn227, Gly256–Gly261, Glu279, Asn314, Ile335–His337, and Asn380.

Belongs to the adenosylhomocysteinase family. NAD(+) serves as cofactor.

It localises to the cytoplasm. The catalysed reaction is S-adenosyl-L-homocysteine + H2O = L-homocysteine + adenosine. It functions in the pathway amino-acid biosynthesis; L-homocysteine biosynthesis; L-homocysteine from S-adenosyl-L-homocysteine: step 1/1. Functionally, may play a key role in the regulation of the intracellular concentration of adenosylhomocysteine. This chain is Adenosylhomocysteinase, found in Rhizobium etli (strain ATCC 51251 / DSM 11541 / JCM 21823 / NBRC 15573 / CFN 42).